Reading from the N-terminus, the 61-residue chain is Photosystem II reaction center X protein (61 aa).

Residues 26 to 46 traverse the membrane as a helical segment; sequence IGSFIAAALLIVVPATAFLIF.

The protein belongs to the PsbX family. Type 2 subfamily. In terms of assembly, PSII consists of a core antenna complex that captures photons, and an electron transfer chain that converts photonic excitation into a charge separation. PSII forms dimeric complexes.

It localises to the cellular thylakoid membrane. In terms of biological role, involved in the binding and/or turnover of quinones at the Q(B) site of Photosystem II. The sequence is that of Photosystem II reaction center X protein from Prochlorococcus marinus (strain AS9601).